The chain runs to 156 residues: Ribosomal RNA large subunit methyltransferase H (156 aa).

Residues Leu73, Gly104, and 123-128 (LSPLTL) each bind S-adenosyl-L-methionine.

The protein belongs to the RNA methyltransferase RlmH family. Homodimer.

It localises to the cytoplasm. It catalyses the reaction pseudouridine(1915) in 23S rRNA + S-adenosyl-L-methionine = N(3)-methylpseudouridine(1915) in 23S rRNA + S-adenosyl-L-homocysteine + H(+). Functionally, specifically methylates the pseudouridine at position 1915 (m3Psi1915) in 23S rRNA. The sequence is that of Ribosomal RNA large subunit methyltransferase H from Photorhabdus laumondii subsp. laumondii (strain DSM 15139 / CIP 105565 / TT01) (Photorhabdus luminescens subsp. laumondii).